Reading from the N-terminus, the 269-residue chain is Protein MGF 110-1L (269 aa).

Residues 1–26 (MLGLQIFTLLSIPTLLYTYELELLDL) form the signal peptide. An A repeat occupies 1-145 (MLGLQIFTLL…YVRKRSLQTV (145 aa)). The Extracellular segment spans residues 27 to 116 (TRTPPEKELE…HEWHEAVIRK (90 aa)). N75 carries N-linked (GlcNAc...) asparagine; by host glycosylation. A helical membrane pass occupies residues 117 to 137 (WQKLLTYGFYLVGCVLVANYV). The Cytoplasmic segment spans residues 138–144 (RKRSLQT). The chain crosses the membrane as a helical span at residues 145 to 165 (VMYLLVLLVIFFLLSQLMLYR). The B repeat unit spans residues 147–269 (YLLVLLVIFF…DNLMKKQDIM (123 aa)). Over 166 to 269 (ELEDKKHKIG…DNLMKKQDIM (104 aa)) the chain is Extracellular.

It belongs to the asfivirus MGF 110 family.

The protein resides in the host membrane. Plays a role in virus cell tropism, and may be required for efficient virus replication in macrophages. The polypeptide is Protein MGF 110-1L (African swine fever virus (isolate Warthog/Namibia/Wart80/1980) (ASFV)).